We begin with the raw amino-acid sequence, 394 residues long: Probable glycosyltransferase FCK3 (394 aa).

This sequence belongs to the afumC glycosyltransferase family.

The protein operates within secondary metabolite biosynthesis. Its function is as follows. Probable glycosyl transferase; part of the gene cluster that mediates the biosynthesis of cytokinins such as fusatin, fusatinic acids or 8-oxofusatin, known for their growth promoting and anti-senescence activities toward host plants. FCK1 is a bifunctional enzyme that performs the first steps in the biosynthesis of Fusarium cytokinins. It first condenses adenosine monophosphate (AMP) with dimethylallyl diphosphate (DMAPP) to yield isoprenyl adenosine monophosphate. It then catalyzes the removal of the phosphoribose to produce isopentenylaldehyde. The cytochrome P450 monooxygenase then converts isopentenylaldehyde to trans-zeatin. A condensation step converts trans-zeatin to fusatin which is further modified to produce fusatinic acid. The mechanism for oxidation of fusatin to fusatinic acid remains unknown. 8-oxofusatin could be produced through several pathways, via direct oxygenation of fusatin, or via the 8-oxo-pentenyladenine intermediate which itself must arise from either the prenylation of 8-oxo-AMP by FCK1 and/or oxygenation of isopentenylaldehyde. Both the FCK3 and FCK4 enzymes act downstream of the identified cytokinins to produce yet unidentified compounds. This is Probable glycosyltransferase FCK3 from Fusarium pseudograminearum (strain CS3096) (Wheat and barley crown-rot fungus).